A 511-amino-acid polypeptide reads, in one-letter code: MESTGSVGEAPGGPRVLVVGGGIAGLGAAQRLCGHSAFPHLRVLEATARAGGRIRSERCFGGVVEVGAHWIHGPSRGNPVFQLAAEYGLLGEKELSQENQLVETGGHVGLPSVSYASSGASVSLQLVAEMATLFYGLIDQTREFLHAAETPVPSVGEYLKKEIGQHVAGWTEDEETRKLKLAVLNSFFNLECCVSGTHSMDLVALAPFGEYTVLPGLDCTFSKGYQGLTNCMMAALPEDTVVFEKPVKTIHWNGSFQEAAFPGETFPVSVECEDGDRFPAHHVIVTVPLGFLREHLDTFFDPPLPAEKAEAIRKIGFGTNNKIFLEFEEPFWEPDCQLIQLVWEDTSPLEDAAPELQDAWFRKLIGFVVLPAFASVHVLCGFIAGLESEFMETLSDEEVLLCLTQVLRRVTGNPRLPAPKSVLRSRWHSAPYTRGSYSYVAVGSTGGDLDLLAQPLPADGAGAQLQILFAGEATHRTFYSTTHGALLSGWREADRLLSLWAPQVQQPRPRL.

N-acetylmethionine is present on Met1. Residues Ala24, Glu45, Arg53, and 69 to 70 each bind FAD; that span reads HW. The substrate site is built by His72 and Val194. Residue Val247 participates in FAD binding. Residue Asn320 coordinates substrate. FAD contacts are provided by residues Glu472 and 481-482; that span reads TT. The short motif at 509 to 511 is the Microbody targeting signal element; sequence PRL.

The protein belongs to the flavin monoamine oxidase family. Monomer. It depends on FAD as a cofactor. As to expression, widely expressed. Not detected in spleen. Expressed at lower level in neoplastic tissues.

Its subcellular location is the peroxisome. The protein localises to the cytoplasm. The catalysed reaction is N(1)-acetylspermine + O2 + H2O = 3-acetamidopropanal + spermidine + H2O2. It carries out the reaction N(1)-acetylspermidine + O2 + H2O = 3-acetamidopropanal + putrescine + H2O2. The enzyme catalyses N(1),N(12)-diacetylspermine + O2 + H2O = 3-acetamidopropanal + N(1)-acetylspermidine + H2O2. It functions in the pathway amine and polyamine metabolism; spermine metabolism. Its function is as follows. Flavoenzyme which catalyzes the oxidation of N(1)-acetylspermine to spermidine and is thus involved in the polyamine back-conversion. Can also oxidize N(1)-acetylspermidine to putrescine. Substrate specificity: N(1)-acetylspermine = N(1)-acetylspermidine &gt; N(1),N(12)-diacylspermine &gt;&gt; spermine. Does not oxidize spermidine. Plays an important role in the regulation of polyamine intracellular concentration and has the potential to act as a determinant of cellular sensitivity to the antitumor polyamine analogs. This chain is Peroxisomal N(1)-acetyl-spermine/spermidine oxidase (PAOX), found in Homo sapiens (Human).